The sequence spans 211 residues: Lysozyme g (211 aa).

An N-terminal signal peptide occupies residues 1 to 26; sequence MLGKNDPMCLVLVLLGLTALLGICQG. 2 cysteine pairs are disulfide-bonded: Cys30-Cys86 and Cys44-Cys55. Residues Glu99 and Asp112 contribute to the active site.

Belongs to the glycosyl hydrolase 23 family. In terms of tissue distribution, granulocyte compartment of myelomonocytic cells.

The protein resides in the secreted. The enzyme catalyses Hydrolysis of (1-&gt;4)-beta-linkages between N-acetylmuramic acid and N-acetyl-D-glucosamine residues in a peptidoglycan and between N-acetyl-D-glucosamine residues in chitodextrins.. This is Lysozyme g from Gallus gallus (Chicken).